The chain runs to 874 residues: MELQRNDFHHPYSPYDIQLQLMRALYSCLEQGKVAVFESPTGTGKSLSLICGSLTWLRDHKRSAFQTAVDNATCDDDEPEWMLDFARRESSRMMTEKRKELEERLEKTRKEEEQQRIALENPEGPRKKQKYSIPLTESGGLSEDQFALDDYDSENEEHSKPRDELAHTSELSPSTLELLERFKGQISTAKPGSDDADNDEVKIFYCSRTHSQLTQFAGELRRVKMPWSIPKDLLSTDLTGEEELEERVKHVTLGSRKNLCINPRVSSLENATAINERCLDLQQPNVNPQHRCPFLPSKEDERQVLQFRDHALSTVKDIEDLGKLGKKIGICPYYASRSVVKDSEVCCLRARSSIDLVPDEWQIVTLPYPLLLQRSAREALNSSVKGHVIIIDEAHNLMDAISNIHSVTVTLSQLQTSLSQLTIYGRKFKTRLKGKNRSYVAQVIRLLSSIAAHLRSLLESGKAPEGPVLISELMSGKGVDQINPYKLSRYLQESKLARKVDGYVEFTRDPSDKQASRSPTVPVLFHIQGFLLSLMNPSAEGRLFYSKEQGDIQLKYMLLDPTNQFRELVEDARAIILAGGTMSPMTDYMNHLFSYVPASRLDTFSYGHVIPPENLIAHTLVRGVQGSEFDFTYDARDSEKMIMDLGRTIATLCHVIPDGVVAFFPSYDYLGRVLNIWKKPMLGEQGQTVYNLIGQKKPILSESRDMTVTTEELLHTYANTVDSGRGALLLSVVGGKLSEGINFSDKLGRGVLIVGLPFPNIRSAVWQAKIQYIEQKTHQQATGSEASRQLAAKAAGRDFYENSCMRAVNQCIGRAIRHRNDYAAIVLVDRRYEKPGIQAKLPAWIKQSMVGSSVQRPAGATVQSLAKFFASKST.

Positions 4 to 444 constitute a Helicase ATP-binding domain; it reads QRNDFHHPYS…KNRSYVAQVI (441 aa). 39-46 contributes to the ATP binding site; the sequence is SPTGTGKS. Composition is skewed to basic and acidic residues over residues 92 to 115 and 156 to 167; these read RMMT…EEQQ and EEHSKPRDELAH. Disordered regions lie at residues 92–143 and 151–170; these read RMMT…GLSE and YDSE…HTSE. 4 residues coordinate [4Fe-4S] cluster: Cys260, Cys278, Cys292, and Cys331. Positions 392–395 match the DEAH box motif; sequence DEAH.

Belongs to the DEAD box helicase family. DEAH subfamily. DDX11/CHL1 sub-subfamily. [4Fe-4S] cluster is required as a cofactor.

Its subcellular location is the nucleus. It catalyses the reaction Couples ATP hydrolysis with the unwinding of duplex DNA at the replication fork by translocating in the 5'-3' direction. This creates two antiparallel DNA single strands (ssDNA). The leading ssDNA polymer is the template for DNA polymerase III holoenzyme which synthesizes a continuous strand.. The catalysed reaction is ATP + H2O = ADP + phosphate + H(+). Functionally, ATP-dependent DNA helicase important for chromosome transmission and normal cell cycle progression in G(2)/M. May have a role in changing DNA topology to allow the loading of proteins involved in maintaining sister chromatid cohesion in the vicinity of the centromeres. Has a specific role in chromosome segregation during meiosis II. The polypeptide is ATP-dependent DNA helicase chl1 (chl1) (Aspergillus niger (strain ATCC MYA-4892 / CBS 513.88 / FGSC A1513)).